A 144-amino-acid chain; its full sequence is Prefoldin subunit alpha (144 aa).

It belongs to the prefoldin alpha subunit family. Heterohexamer of two alpha and four beta subunits.

It localises to the cytoplasm. In terms of biological role, molecular chaperone capable of stabilizing a range of proteins. Seems to fulfill an ATP-independent, HSP70-like function in archaeal de novo protein folding. In Metallosphaera sedula (strain ATCC 51363 / DSM 5348 / JCM 9185 / NBRC 15509 / TH2), this protein is Prefoldin subunit alpha.